Here is a 213-residue protein sequence, read N- to C-terminus: MSLFDKKQLVSQADALPGRNTPMPVATLHAVNNHSMTNVPDGMEIALFAMGCFWGVERLFWQLPGVYSTAAGYTGGYTPNPTYREVCSGETGHAEAVRIVYDPSVTRYEQLLQVFWENHDPAQGMQQGNDHGTQYRSAIYPLTPEQDAAARASLARFQDAMQAAGDHRTVTTEIANATPFYYAEDDHQQYLHKNPYGYCGIGGIGICLPPQLA.

Cysteine 52 is a catalytic residue.

Belongs to the MsrA Met sulfoxide reductase family.

It carries out the reaction L-methionyl-[protein] + [thioredoxin]-disulfide + H2O = L-methionyl-(S)-S-oxide-[protein] + [thioredoxin]-dithiol. The catalysed reaction is [thioredoxin]-disulfide + L-methionine + H2O = L-methionine (S)-S-oxide + [thioredoxin]-dithiol. Functionally, has an important function as a repair enzyme for proteins that have been inactivated by oxidation. Catalyzes the reversible oxidation-reduction of methionine sulfoxide in proteins to methionine. This chain is Peptide methionine sulfoxide reductase MsrA, found in Enterobacter sp. (strain 638).